The sequence spans 103 residues: Flagellar hook-basal body complex protein FliE (103 aa).

It belongs to the FliE family.

It is found in the bacterial flagellum basal body. In Photorhabdus laumondii subsp. laumondii (strain DSM 15139 / CIP 105565 / TT01) (Photorhabdus luminescens subsp. laumondii), this protein is Flagellar hook-basal body complex protein FliE.